We begin with the raw amino-acid sequence, 334 residues long: Holliday junction branch migration complex subunit RuvB (334 aa).

Residues 4-184 (ADRLIQPQLQ…FGIPLRLEFY (181 aa)) form a large ATPase domain (RuvB-L) region. Residues arginine 24, glycine 65, lysine 68, threonine 69, threonine 70, 131–133 (EDY), arginine 174, tyrosine 184, and arginine 221 each bind ATP. Threonine 69 contacts Mg(2+). Residues 185–255 (NVKDLSTIVT…VAELALNLLD (71 aa)) are small ATPAse domain (RuvB-S). The segment at 258 to 334 (GEGFDYMDRK…YVHFGMIKPE (77 aa)) is head domain (RuvB-H). Positions 294, 313, and 318 each coordinate DNA.

The protein belongs to the RuvB family. As to quaternary structure, homohexamer. Forms an RuvA(8)-RuvB(12)-Holliday junction (HJ) complex. HJ DNA is sandwiched between 2 RuvA tetramers; dsDNA enters through RuvA and exits via RuvB. An RuvB hexamer assembles on each DNA strand where it exits the tetramer. Each RuvB hexamer is contacted by two RuvA subunits (via domain III) on 2 adjacent RuvB subunits; this complex drives branch migration. In the full resolvosome a probable DNA-RuvA(4)-RuvB(12)-RuvC(2) complex forms which resolves the HJ.

The protein resides in the cytoplasm. It carries out the reaction ATP + H2O = ADP + phosphate + H(+). The RuvA-RuvB-RuvC complex processes Holliday junction (HJ) DNA during genetic recombination and DNA repair, while the RuvA-RuvB complex plays an important role in the rescue of blocked DNA replication forks via replication fork reversal (RFR). RuvA specifically binds to HJ cruciform DNA, conferring on it an open structure. The RuvB hexamer acts as an ATP-dependent pump, pulling dsDNA into and through the RuvAB complex. RuvB forms 2 homohexamers on either side of HJ DNA bound by 1 or 2 RuvA tetramers; 4 subunits per hexamer contact DNA at a time. Coordinated motions by a converter formed by DNA-disengaged RuvB subunits stimulates ATP hydrolysis and nucleotide exchange. Immobilization of the converter enables RuvB to convert the ATP-contained energy into a lever motion, pulling 2 nucleotides of DNA out of the RuvA tetramer per ATP hydrolyzed, thus driving DNA branch migration. The RuvB motors rotate together with the DNA substrate, which together with the progressing nucleotide cycle form the mechanistic basis for DNA recombination by continuous HJ branch migration. Branch migration allows RuvC to scan DNA until it finds its consensus sequence, where it cleaves and resolves cruciform DNA. This chain is Holliday junction branch migration complex subunit RuvB, found in Shewanella oneidensis (strain ATCC 700550 / JCM 31522 / CIP 106686 / LMG 19005 / NCIMB 14063 / MR-1).